We begin with the raw amino-acid sequence, 139 residues long: D-ribose pyranase (139 aa).

The active-site Proton donor is His-20. Substrate-binding positions include Asp-28, His-106, and 128 to 130 (YAN).

This sequence belongs to the RbsD / FucU family. RbsD subfamily. In terms of assembly, homodecamer.

It localises to the cytoplasm. The catalysed reaction is beta-D-ribopyranose = beta-D-ribofuranose. Its pathway is carbohydrate metabolism; D-ribose degradation; D-ribose 5-phosphate from beta-D-ribopyranose: step 1/2. In terms of biological role, catalyzes the interconversion of beta-pyran and beta-furan forms of D-ribose. The chain is D-ribose pyranase from Salmonella choleraesuis (strain SC-B67).